A 469-amino-acid polypeptide reads, in one-letter code: Soluble pyridine nucleotide transhydrogenase (469 aa).

Residue 39 to 48 (ERENSVGGGC) participates in FAD binding.

The protein belongs to the class-I pyridine nucleotide-disulfide oxidoreductase family. FAD serves as cofactor.

The protein localises to the cytoplasm. The catalysed reaction is NAD(+) + NADPH = NADH + NADP(+). Conversion of NADPH, generated by peripheral catabolic pathways, to NADH, which can enter the respiratory chain for energy generation. The protein is Soluble pyridine nucleotide transhydrogenase of Photobacterium profundum (strain SS9).